Reading from the N-terminus, the 448-residue chain is Pentatricopeptide repeat-containing protein At1g80550, mitochondrial (448 aa).

The N-terminal 21 residues, 1-21 (MLLLRRLNRVRIASPYSVRLL), are a transit peptide targeting the mitochondrion. PPR repeat units follow at residues 80–110 (TTETFNRVIDILGKYFEFEISWALINRMIGN), 116–146 (NHVTFRIVFKRYVTAHLVQEAIDAYDKLDDF), 150–186 (DETSFYNLVDALCEHKHVVEAEELCFGKNVIGNGFSV), 188–222 (NTKIHNLILRGWSKLGWWGKCKEYWKKMDTEGVTK), 223–257 (DLFSYSIYMDIMCKSGKPWKAVKLYKEMKSRRMKL), 258–292 (DVVAYNTVIRAIGASQGVEFGIRVFREMRERGCEP), 293–327 (NVATHNTIIKLLCEDGRMRDAYRMLDEMPKRGCQP), 331–359 (TYMCLFSRLEKPSEILSLFGRMIRSGVRP), 360–394 (KMDTYVMLMRKFERWGFLQPVLYVWKTMKESGDTP), and 395–429 (DSAAYNAVIDALIQKGMLDMAREYEEEMIERGLSP).

This sequence belongs to the PPR family. P subfamily.

The protein resides in the mitochondrion. The chain is Pentatricopeptide repeat-containing protein At1g80550, mitochondrial from Arabidopsis thaliana (Mouse-ear cress).